A 261-amino-acid chain; its full sequence is CD40 ligand (261 aa).

The Cytoplasmic segment spans residues 1–22 (MIETYNQTSPRSAATGLPISMK). Residues 23 to 46 (IFMYLLTVFLITQMIGSALFAVYL) form a helical; Signal-anchor for type II membrane protein membrane-spanning segment. The Extracellular portion of the chain corresponds to 47-261 (HRRLDKIEDE…GFTSFGLLKL (215 aa)). Residues 122–261 (IAAHVISEAS…GFTSFGLLKL (140 aa)) enclose the THD domain. A disulfide bond links cysteine 178 and cysteine 218. Asparagine 240 carries N-linked (GlcNAc...) (complex) asparagine; alternate glycosylation. An N-linked (GlcNAc...) (high mannose) asparagine; alternate glycan is attached at asparagine 240.

The protein belongs to the tumor necrosis factor family. In terms of assembly, homotrimer. Interacts with isoform 3 of CD28. CD40 ligand, soluble form: Exists as either a monomer or a homotrimer. Forms a ternary complex between CD40 and integrins for CD40-CD40LG signaling. The soluble form derives from the membrane form by proteolytic processing. Post-translationally, N-linked glycan is a mixture of high mannose and complex type. Glycan structure does not influence binding affinity to CD40. In terms of processing, not O-glycosylated. As to expression, specifically expressed on activated CD4+ T-lymphocytes.

It is found in the cell membrane. The protein localises to the cell surface. It localises to the secreted. Functionally, cytokine that acts as a ligand to CD40/TNFRSF5. Costimulates T-cell proliferation and cytokine production. Its cross-linking on T-cells generates a costimulatory signal which enhances the production of IL4 and IL10 in conjunction with the TCR/CD3 ligation and CD28 costimulation. Induces the activation of NF-kappa-B. Induces the activation of kinases MAPK8 and PAK2 in T-cells. Induces tyrosine phosphorylation of isoform 3 of CD28. Mediates B-cell proliferation in the absence of co-stimulus as well as IgE production in the presence of IL4. Involved in immunoglobulin class switching. Its function is as follows. Acts as a ligand for integrins, specifically ITGA5:ITGB1 and ITGAV:ITGB3; both integrins and the CD40 receptor are required for activation of CD40-CD40LG signaling, which have cell-type dependent effects, such as B-cell activation, NF-kappa-B signaling and anti-apoptotic signaling. This chain is CD40 ligand (CD40LG), found in Homo sapiens (Human).